The chain runs to 121 residues: Small ribosomal subunit protein bS6 (121 aa).

Positions 99 to 121 are disordered; it reads PSLMMRNVEREEARKTQQQEFAA. Positions 105–115 are enriched in basic and acidic residues; it reads NVEREEARKTQ.

The protein belongs to the bacterial ribosomal protein bS6 family.

Binds together with bS18 to 16S ribosomal RNA. The sequence is that of Small ribosomal subunit protein bS6 from Polaromonas naphthalenivorans (strain CJ2).